The following is a 562-amino-acid chain: Potassium-transporting ATPase potassium-binding subunit (562 aa).

12 consecutive transmembrane segments (helical) span residues 5–25 (GILA…PLGG), 65–85 (AYLR…YAVF), 135–155 (IGIT…AMAF), 181–201 (LLLP…VPET), 257–277 (ILEI…AGHF), 283–303 (LAIV…YIVY), 331–351 (FGLP…TGAV), 358–378 (LMPL…IFGG), 381–401 (VGLL…GLMV), 422–442 (AAML…MALP), 486–506 (ISIG…MLAI), and 528–548 (FAFG…TFFP).

This sequence belongs to the KdpA family. The system is composed of three essential subunits: KdpA, KdpB and KdpC.

The protein localises to the cell membrane. Its function is as follows. Part of the high-affinity ATP-driven potassium transport (or Kdp) system, which catalyzes the hydrolysis of ATP coupled with the electrogenic transport of potassium into the cytoplasm. This subunit binds the extracellular potassium ions and delivers the ions to the membrane domain of KdpB through an intramembrane tunnel. The sequence is that of Potassium-transporting ATPase potassium-binding subunit from Alicyclobacillus acidocaldarius subsp. acidocaldarius (strain ATCC 27009 / DSM 446 / BCRC 14685 / JCM 5260 / KCTC 1825 / NBRC 15652 / NCIMB 11725 / NRRL B-14509 / 104-IA) (Bacillus acidocaldarius).